A 564-amino-acid polypeptide reads, in one-letter code: Protein NRT1/ PTR FAMILY 5.16 (564 aa).

Helical transmembrane passes span 49-69 and 80-100; these read FAYFGIGSNLITYLTGPLGQS and WSGTASILPVLGAFIADAYLG. The residue at position 104 (T104) is a Phosphothreonine. The next 10 helical transmembrane spans lie at 110–130, 145–165, 192–212, 220–240, 327–347, 358–378, 408–428, 450–470, 486–506, and 533–553; these read LIYILGLGLLTLSSILILMGL, FFWVNILFFCSLYLVAIGQGG, FFNWWFLSLSAGITLSIIVVV, WALGFGIPCLFMVMALALFLF, IPIWITSVVSTIPYAQYATFF, ILPGFEIPPASFQALIGLSIF, IGAGMVLSSLNMVVAALVEMK, IWWFVPQYLLLGMIDVFSLVG, IGLALSLSAMGLASFLSGFLI, and YFYWLLAAFTAIGFLAFLLLS.

It belongs to the major facilitator superfamily. Proton-dependent oligopeptide transporter (POT/PTR) (TC 2.A.17) family. Expressed in shoots and roots.

The protein localises to the membrane. This is Protein NRT1/ PTR FAMILY 5.16 (NPF5.16) from Arabidopsis thaliana (Mouse-ear cress).